A 615-amino-acid polypeptide reads, in one-letter code: DNA mismatch repair protein MutL (615 aa).

The disordered stretch occupies residues 362 to 397 (HFAEPAVREPVAPRYSPAPASGSRPAASWPNAQPGY). A compositionally biased stretch (low complexity) spans 373–391 (APRYSPAPASGSRPAASWP).

This sequence belongs to the DNA mismatch repair MutL/HexB family.

Its function is as follows. This protein is involved in the repair of mismatches in DNA. It is required for dam-dependent methyl-directed DNA mismatch repair. May act as a 'molecular matchmaker', a protein that promotes the formation of a stable complex between two or more DNA-binding proteins in an ATP-dependent manner without itself being part of a final effector complex. The chain is DNA mismatch repair protein MutL from Escherichia coli O45:K1 (strain S88 / ExPEC).